The primary structure comprises 96 residues: Protein Vpr (96 aa).

The interval 1–42 is homooligomerization; the sequence is MEQAPEDQGPQREPYNEWTLELLRKLKSEAVRHFPRIWLHGL. Phosphoserine; by host occurs at positions 79, 94, and 96.

This sequence belongs to the HIV-1 VPR protein family. Homooligomer, may form homodimer. Interacts with p6-gag region of the Pr55 Gag precursor protein through a (Leu-X-X)4 motif near the C-terminus of the P6gag protein. Interacts with host UNG. May interact with host RAD23A/HHR23A. Interacts with host VPRBP/DCAF1, leading to hijack the CUL4A-RBX1-DDB1-DCAF1/VPRBP complex, mediating ubiquitination of host proteins such as TERT and ZGPAT and arrest of the cell cycle in G2 phase. In terms of processing, phosphorylated on several residues by host. These phosphorylations regulate VPR activity for the nuclear import of the HIV-1 pre-integration complex.

Its subcellular location is the virion. It is found in the host nucleus. The protein localises to the host extracellular space. During virus replication, may deplete host UNG protein, and incude G2-M cell cycle arrest. Acts by targeting specific host proteins for degradation by the 26S proteasome, through association with the cellular CUL4A-DDB1 E3 ligase complex by direct interaction with host VPRPB/DCAF-1. Cell cycle arrest reportedly occurs within hours of infection and is not blocked by antiviral agents, suggesting that it is initiated by the VPR carried into the virion. Additionally, VPR induces apoptosis in a cell cycle dependent manner suggesting that these two effects are mechanistically linked. Detected in the serum and cerebrospinal fluid of AIDS patient, VPR may also induce cell death to bystander cells. Its function is as follows. During virus entry, plays a role in the transport of the viral pre-integration (PIC) complex to the host nucleus. This function is crucial for viral infection of non-dividing macrophages. May act directly at the nuclear pore complex, by binding nucleoporins phenylalanine-glycine (FG)-repeat regions. The polypeptide is Protein Vpr (Homo sapiens (Human)).